A 188-amino-acid polypeptide reads, in one-letter code: MNITATVLLAFGMSMDAFAASVGKGATLHKPKFSEALRTGLIFGAVETLTPLIGWGMGMLASRFVLEWNHWIAFVLLIFLGGRMIIEGFRGADDEDEEPRRRHGFWLLVTTAIATSLDAMAVGVGLAFLQVNIIATALAIGCATLIMSTLGMMVGRFIGSIIGKKAEILGGLVLIGIGVQILWTHFHG.

Transmembrane regions (helical) follow at residues 3 to 23 (ITAT…ASVG), 66 to 86 (LEWN…RMII), 106 to 128 (WLLV…GLAF), 143 to 163 (ATLI…SIIG), and 168 to 188 (ILGG…HFHG).

It belongs to the MntP (TC 9.B.29) family.

Its subcellular location is the cell inner membrane. Functionally, probably functions as a manganese efflux pump. This is Probable manganese efflux pump MntP from Shigella sonnei (strain Ss046).